A 246-amino-acid chain; its full sequence is Probable transcriptional regulatory protein CGSHiEE_01480 (246 aa).

Belongs to the TACO1 family.

The protein localises to the cytoplasm. The chain is Probable transcriptional regulatory protein CGSHiEE_01480 from Haemophilus influenzae (strain PittEE).